Consider the following 198-residue polypeptide: Dynactin subunit 5 (198 aa).

The span at asparagine 179–serine 188 shows a compositional bias: polar residues. The segment at asparagine 179–threonine 198 is disordered. The span at threonine 189 to threonine 198 shows a compositional bias: low complexity.

The protein belongs to the dynactin subunits 5/6 family. Dynactin subunit 5 subfamily. In terms of assembly, member of the pointed-end complex of the dynactin shoulder complex.

It is found in the cytoplasm. The protein localises to the cytoskeleton. In Dictyostelium discoideum (Social amoeba), this protein is Dynactin subunit 5 (dynE).